Consider the following 346-residue polypeptide: N-acetyl-gamma-glutamyl-phosphate reductase (346 aa).

Cys-149 is a catalytic residue.

This sequence belongs to the NAGSA dehydrogenase family. Type 1 subfamily.

The protein localises to the cytoplasm. The catalysed reaction is N-acetyl-L-glutamate 5-semialdehyde + phosphate + NADP(+) = N-acetyl-L-glutamyl 5-phosphate + NADPH + H(+). The protein operates within amino-acid biosynthesis; L-arginine biosynthesis; N(2)-acetyl-L-ornithine from L-glutamate: step 3/4. Catalyzes the NADPH-dependent reduction of N-acetyl-5-glutamyl phosphate to yield N-acetyl-L-glutamate 5-semialdehyde. The polypeptide is N-acetyl-gamma-glutamyl-phosphate reductase (Saccharophagus degradans (strain 2-40 / ATCC 43961 / DSM 17024)).